Consider the following 212-residue polypeptide: Peptide methionine sulfoxide reductase MsrA (212 aa).

The active site involves C52.

Belongs to the MsrA Met sulfoxide reductase family.

The enzyme catalyses L-methionyl-[protein] + [thioredoxin]-disulfide + H2O = L-methionyl-(S)-S-oxide-[protein] + [thioredoxin]-dithiol. It catalyses the reaction [thioredoxin]-disulfide + L-methionine + H2O = L-methionine (S)-S-oxide + [thioredoxin]-dithiol. Its function is as follows. Has an important function as a repair enzyme for proteins that have been inactivated by oxidation. Catalyzes the reversible oxidation-reduction of methionine sulfoxide in proteins to methionine. This Shigella boydii serotype 4 (strain Sb227) protein is Peptide methionine sulfoxide reductase MsrA.